The primary structure comprises 365 residues: Probable L-tyrosine/L-aspartate decarboxylase (365 aa).

An N6-(pyridoxal phosphate)lysine modification is found at lysine 224.

This sequence belongs to the group II decarboxylase family. MfnA subfamily. The cofactor is pyridoxal 5'-phosphate.

The enzyme catalyses L-tyrosine + H(+) = tyramine + CO2. The catalysed reaction is L-aspartate + H(+) = beta-alanine + CO2. The protein operates within cofactor biosynthesis; methanofuran biosynthesis. Its pathway is cofactor biosynthesis; coenzyme A biosynthesis. In terms of biological role, catalyzes the decarboxylation of L-tyrosine to produce tyramine for methanofuran biosynthesis. Can also catalyze the decarboxylation of L-aspartate to produce beta-alanine for coenzyme A (CoA) biosynthesis. This chain is Probable L-tyrosine/L-aspartate decarboxylase, found in Methanoculleus marisnigri (strain ATCC 35101 / DSM 1498 / JR1).